Reading from the N-terminus, the 302-residue chain is tRNA pseudouridine synthase B (302 aa).

Residue aspartate 43 is the Nucleophile of the active site.

This sequence belongs to the pseudouridine synthase TruB family. Type 1 subfamily.

The enzyme catalyses uridine(55) in tRNA = pseudouridine(55) in tRNA. In terms of biological role, responsible for synthesis of pseudouridine from uracil-55 in the psi GC loop of transfer RNAs. In Burkholderia mallei (strain NCTC 10247), this protein is tRNA pseudouridine synthase B.